The chain runs to 156 residues: MLYKNVDEFIKVIDKTKRIMGLDFGEKKIGIALSDRTNLIAIPYSVYVRRSSRKDLGSLYSIFVENDVGSIVIGWPLELSGVENELCQKVVMFANRIITRYKINICLHDERYSTAMATRLAKLANIKRKESQAIDDKISAVLILQQVLDIIKVYQM.

Belongs to the YqgF nuclease family.

It is found in the cytoplasm. Could be a nuclease involved in processing of the 5'-end of pre-16S rRNA. This is Putative pre-16S rRNA nuclease from Ehrlichia chaffeensis (strain ATCC CRL-10679 / Arkansas).